The following is a 722-amino-acid chain: Mating-type switching protein swi2 (722 aa).

Disordered stretches follow at residues 1-35 (MNVNKKQESIPVNTGSESISSNDNERFEQGKGVGS) and 301-342 (SEEF…PLPS). Positions 9–22 (SIPVNTGSESISSN) are enriched in polar residues. Over residues 302–316 (EEFDFEPSREDEDFP) the composition is skewed to acidic residues. Over residues 319–332 (TSDSTGQDPLSSEP) the composition is skewed to polar residues.

In terms of assembly, interacts with swi5 and rhp51.

Functionally, required for normal mating-type switching. The sequence is that of Mating-type switching protein swi2 (swi2) from Schizosaccharomyces pombe (strain 972 / ATCC 24843) (Fission yeast).